The primary structure comprises 84 residues: Delta-stichotoxin-Shd3a (84 aa).

The N-terminal stretch at 1 to 19 (MAYLKIVLVALMLVLGVSA) is a signal peptide. Positions 20-33 (MRLSDQEDQDVSVV) are excised as a propeptide. Cystine bridges form between C38–C78, C40–C68, and C61–C79. Position 83 is a lysine amide (K83).

This sequence belongs to the sea anemone sodium channel inhibitory toxin family. Type II subfamily.

It localises to the secreted. The protein resides in the nematocyst. Binds specifically to voltage-gated sodium channels (Nav), thereby delaying their inactivation during signal transduction. The polypeptide is Delta-stichotoxin-Shd3a (Stichodactyla haddoni (Saddle carpet anemone)).